The chain runs to 469 residues: Citrate synthase, mitochondrial (469 aa).

A mitochondrion-targeting transit peptide spans 1–30 (MSFLSVSRLAPKLLNSKNATYFLVAARNAS). Residues H304 and H350 contribute to the active site. Oxaloacetate is bound at residue R359. D405 is an active-site residue. 2 residues coordinate oxaloacetate: R431 and R451.

Belongs to the citrate synthase family. In terms of assembly, homodimer.

It is found in the mitochondrion matrix. It carries out the reaction oxaloacetate + acetyl-CoA + H2O = citrate + CoA + H(+). It functions in the pathway carbohydrate metabolism; tricarboxylic acid cycle; isocitrate from oxaloacetate: step 1/2. Functionally, key enzyme of the Krebs tricarboxylic acid cycle which catalyzes the synthesis of citrate from acetyl coenzyme A and oxaloacetate. This Thunnus albacares (Yellowfin tuna) protein is Citrate synthase, mitochondrial (cs).